Reading from the N-terminus, the 200-residue chain is Large ribosomal subunit protein uL4 (200 aa).

Positions 42–65 are disordered; that stretch reads TRAQKTRSEVSGGGAKPWRQKGTG.

This sequence belongs to the universal ribosomal protein uL4 family. As to quaternary structure, part of the 50S ribosomal subunit.

Functionally, one of the primary rRNA binding proteins, this protein initially binds near the 5'-end of the 23S rRNA. It is important during the early stages of 50S assembly. It makes multiple contacts with different domains of the 23S rRNA in the assembled 50S subunit and ribosome. In terms of biological role, forms part of the polypeptide exit tunnel. The chain is Large ribosomal subunit protein uL4 from Vibrio atlanticus (strain LGP32) (Vibrio splendidus (strain Mel32)).